A 387-amino-acid polypeptide reads, in one-letter code: 3-ketoacyl-CoA thiolase (387 aa).

C91 functions as the Acyl-thioester intermediate in the catalytic mechanism. Residues H343 and C373 each act as proton acceptor in the active site.

The protein belongs to the thiolase-like superfamily. Thiolase family. As to quaternary structure, heterotetramer of two alpha chains (FadB) and two beta chains (FadA).

It is found in the cytoplasm. It catalyses the reaction an acyl-CoA + acetyl-CoA = a 3-oxoacyl-CoA + CoA. It functions in the pathway lipid metabolism; fatty acid beta-oxidation. Functionally, catalyzes the final step of fatty acid oxidation in which acetyl-CoA is released and the CoA ester of a fatty acid two carbons shorter is formed. The protein is 3-ketoacyl-CoA thiolase of Shigella sonnei (strain Ss046).